The following is a 552-amino-acid chain: Carboxypeptidase Y homolog A (552 aa).

The first 17 residues, Met-1 to Thr-17, serve as a signal peptide directing secretion. A propeptide spanning residues Pro-18–Lys-133 is cleaved from the precursor. Disulfide bonds link Cys-188–Cys-428, Cys-322–Cys-336, Cys-346–Cys-369, Cys-353–Cys-362, and Cys-391–Cys-398. Residue Asn-219 is glycosylated (N-linked (GlcNAc...) asparagine). The active site involves Ser-275. Asp-467 is a catalytic residue. Asn-518 carries N-linked (GlcNAc...) asparagine glycosylation. His-529 is an active-site residue.

This sequence belongs to the peptidase S10 family.

The protein localises to the vacuole. It carries out the reaction Release of a C-terminal amino acid with broad specificity.. Vacuolar carboxypeptidase involved in degradation of small peptides. Digests preferentially peptides containing an aliphatic or hydrophobic residue in P1' position, as well as methionine, leucine or phenylalanine in P1 position of ester substrate. This Emericella nidulans (strain FGSC A4 / ATCC 38163 / CBS 112.46 / NRRL 194 / M139) (Aspergillus nidulans) protein is Carboxypeptidase Y homolog A (cpyA).